The chain runs to 657 residues: Probable Xaa-Pro aminopeptidase P (657 aa).

The Mn(2+) site is built by Asp453, Asp464, Glu562, and Glu576.

This sequence belongs to the peptidase M24B family. Mn(2+) is required as a cofactor.

It carries out the reaction Release of any N-terminal amino acid, including proline, that is linked to proline, even from a dipeptide or tripeptide.. Its function is as follows. Catalyzes the removal of a penultimate prolyl residue from the N-termini of peptides. The chain is Probable Xaa-Pro aminopeptidase P (ampp) from Talaromyces marneffei (strain ATCC 18224 / CBS 334.59 / QM 7333) (Penicillium marneffei).